Here is a 275-residue protein sequence, read N- to C-terminus: Autophagy protein 5 (275 aa).

Position 1 is an N-acetylmethionine (Met-1). Residue Lys-130 forms a Glycyl lysine isopeptide (Lys-Gly) (interchain with G-Cter in ATG12) linkage.

Belongs to the ATG5 family. In terms of assembly, forms a conjugate with ATG12. Part of the minor complex composed of 4 sets of ATG12-ATG5 and ATG16L1 (400 kDa); this complex interacts with ATG3 leading to disruption of ATG7 interaction and promotion of ATG8-like proteins lipidation. Forms an 800-kDa complex composed of ATG12-ATG5 and ATG16L2. The ATG12-ATG5 conjugate interacts with RAB33A; this interaction is bridged by ATG16L1 and promotes ATG12-ATG5-ATG16L1 complex recruitment to phagophores. Interacts with TECPR1; the interaction is direct and does not take place when ATG16L1 is associated with the ATG5-ATG12 conjugate. Interacts with DHX58/RIG-1, IFIH1/MDA5 and MAVS/IPS-1 in monomeric form as well as in ATG12-ATG5 conjugate form. The interaction with MAVS is further enhanced upon vesicular stomatitis virus (VSV) infection. Interacts with ATG3. Interacts with ATG7 and ATG10. Interacts with FADD. Interacts with Bassoon/BSN; this interaction is important for the regulation of presynaptic autophagy. Interacts with ATG16L2. In terms of processing, conjugated to ATG12; which is essential for autophagy, but is not required for association with isolation membrane. Post-translationally, acetylated by EP300. Ubiquitous.

The protein localises to the cytoplasm. Its subcellular location is the preautophagosomal structure membrane. Involved in autophagic vesicle formation. Conjugation with ATG12, through a ubiquitin-like conjugating system involving ATG7 as an E1-like activating enzyme and ATG10 as an E2-like conjugating enzyme, is essential for its function. The ATG12-ATG5 conjugate acts as an E3-like enzyme which is required for lipidation of ATG8 family proteins and their association to the vesicle membranes. Involved in mitochondrial quality control after oxidative damage, and in subsequent cellular longevity. Plays a critical role in multiple aspects of lymphocyte development and is essential for both B and T lymphocyte survival and proliferation. Required for optimal processing and presentation of antigens for MHC II. Involved in the maintenance of axon morphology and membrane structures, as well as in normal adipocyte differentiation. Promotes primary ciliogenesis through removal of OFD1 from centriolar satellites and degradation of IFT20 via the autophagic pathway. As part of the ATG8 conjugation system with ATG12 and ATG16L1, required for recruitment of LRRK2 to stressed lysosomes and induction of LRRK2 kinase activity in response to lysosomal stress. In terms of biological role, may play an important role in the apoptotic process, possibly within the modified cytoskeleton. Its expression is a relatively late event in the apoptotic process, occurring downstream of caspase activity. Plays a crucial role in IFN-gamma-induced autophagic cell death by interacting with FADD. Functionally, (Microbial infection) May act as a proviral factor. In association with ATG12, negatively regulates the innate antiviral immune response by impairing the type I IFN production pathway upon vesicular stomatitis virus (VSV) infection. This Mus musculus (Mouse) protein is Autophagy protein 5.